We begin with the raw amino-acid sequence, 176 residues long: dCTP deaminase (176 aa).

DCTP is bound by residues 99 to 104 and aspartate 115; that span reads RSTLAR. Glutamate 125 (proton donor/acceptor) is an active-site residue. Glutamine 163 provides a ligand contact to dCTP.

The protein belongs to the dCTP deaminase family. As to quaternary structure, homotrimer.

The catalysed reaction is dCTP + H2O + H(+) = dUTP + NH4(+). It participates in pyrimidine metabolism; dUMP biosynthesis; dUMP from dCTP (dUTP route): step 1/2. Functionally, catalyzes the deamination of dCTP to dUTP. The polypeptide is dCTP deaminase (Pyrobaculum aerophilum (strain ATCC 51768 / DSM 7523 / JCM 9630 / CIP 104966 / NBRC 100827 / IM2)).